The following is a 297-amino-acid chain: 4-hydroxy-tetrahydrodipicolinate synthase (297 aa).

Thr50 is a binding site for pyruvate. Tyr139 serves as the catalytic Proton donor/acceptor. The active-site Schiff-base intermediate with substrate is the Lys167. Residue Val209 coordinates pyruvate.

The protein belongs to the DapA family. In terms of assembly, homotetramer; dimer of dimers.

The protein localises to the cytoplasm. It carries out the reaction L-aspartate 4-semialdehyde + pyruvate = (2S,4S)-4-hydroxy-2,3,4,5-tetrahydrodipicolinate + H2O + H(+). The protein operates within amino-acid biosynthesis; L-lysine biosynthesis via DAP pathway; (S)-tetrahydrodipicolinate from L-aspartate: step 3/4. Functionally, catalyzes the condensation of (S)-aspartate-beta-semialdehyde [(S)-ASA] and pyruvate to 4-hydroxy-tetrahydrodipicolinate (HTPA). This chain is 4-hydroxy-tetrahydrodipicolinate synthase, found in Microcystis aeruginosa (strain NIES-843 / IAM M-2473).